Here is a 3046-residue protein sequence, read N- to C-terminus: Nucleosome-remodeling factor subunit BPTF (3046 aa).

The disordered stretch occupies residues 1-232 (MRGRRGRPPK…DIPPLEFPKS (232 aa)). Residues 22–33 (PAPPPPPPPPTS) show a composition bias toward pro residues. Over residues 62–72 (TRLSSPRGGSS) the composition is skewed to low complexity. Over residues 78 to 87 (PPPPPAPPST) the composition is skewed to pro residues. Gly residues predominate over residues 91 to 110 (GRGGRGGGGGRTGGGGGGGH). Residues 129–186 (HESEEEEEEEDMVSEEEEEEDGDAEETQDSEDDEEDEMEEDDDDSDYPEEMEDDDDDA) are compositionally biased toward acidic residues. Over residues 190–203 (TESSFRSHSTYSST) the composition is skewed to low complexity. Residues 205 to 215 (GRRKPRVHRPR) show a composition bias toward basic residues. Residue Ser-216 is modified to Phosphoserine. The DDT domain maps to 240-300 (NEHIMNVIAI…LKAVLREEDT (61 aa)). The PHD-type 1 zinc-finger motif lies at 390–437 (DDHCRVCHKLGDLLCCETCSAVYHLECVKPPLEEVPEDEWQCEVCVAH). 2 stretches are compositionally biased toward basic and acidic residues: residues 567–609 (IDNV…SDDK) and 616–628 (EQGK…EVGD). Residues 567–774 (IDNVKSPEET…GAGKGASGST (208 aa)) form a disordered region. Phosphoserine is present on Ser-572. The stretch at 574–604 (EETEKDKNETENDSKDAEKNREEFEDQSLEK) forms a coiled coil. 2 stretches are compositionally biased toward polar residues: residues 631–653 (NSVS…SPSE) and 690–705 (TCES…SIQP). The interaction with KEAP1 stretch occupies residues 640–749 (NTTNATSEET…PVSIQEEIVG (110 aa)). Residues 706 to 723 (NLENSNSSSELNSSQSES) show a composition bias toward low complexity. Over residues 725 to 738 (KAADDPENGERESH) the composition is skewed to basic and acidic residues. Phosphoserine occurs at positions 763 and 817. An interaction with MAZ region spans residues 839 to 921 (YFKLGQEGKY…QLENNIPSSF (83 aa)). N6-acetyllysine is present on Lys-880. A coiled-coil region spans residues 978-1007 (MTSIEREEKEKVKKKEKKQEEEETMQQATW). The disordered stretch occupies residues 1057-1157 (YRKSLEGTKN…MKTESHVNCQ (101 aa)). A Phosphothreonine modification is found at Thr-1064. Basic and acidic residues-rich tracts occupy residues 1087-1102 (IKIE…KGSD) and 1113-1152 (DISK…KTES). Glycyl lysine isopeptide (Lys-Gly) (interchain with G-Cter in SUMO2) cross-links involve residues Lys-1088, Lys-1138, and Lys-1209. 4 disordered regions span residues 1215 to 1339 (KGIG…GNDF), 1371 to 1448 (IVSS…FRTR), 1465 to 1537 (GEST…NGKD), and 1605 to 1706 (NSSE…GESK). Polar residues-rich tracts occupy residues 1220-1232 (TSTN…SESP), 1242-1257 (QSDS…ANND), and 1266-1285 (CSES…TTNK). Position 1231 is a phosphoserine (Ser-1231). Residues 1287-1305 (YPKDRVLDDVSIRSPETKC) are compositionally biased toward basic and acidic residues. Ser-1300 is modified (phosphoserine). Thr-1303 is modified (phosphothreonine). Ser-1310 carries the phosphoserine modification. Residues 1372–1386 (VSSSKSALHSSVPKS) are compositionally biased toward low complexity. Composition is skewed to polar residues over residues 1409–1426 (SESN…SIQD) and 1434–1444 (VQNSNESISEQ). Residues 1491–1525 (KKLEERPVNKCSDQIKLKNTTDKKNNENRESEKKG) show a composition bias toward basic and acidic residues. Positions 1629–1656 (TLPSTKESDSTQTTTPSASCPESNSVNQ) are enriched in polar residues. Lys-1730 participates in a covalent cross-link: Glycyl lysine isopeptide (Lys-Gly) (interchain with G-Cter in SUMO2). Disordered regions lie at residues 1973–2003 (VPET…TPKQ) and 2041–2070 (QAKK…STIS). Residues 2022 to 2050 (EIRAFAERVEKEKAQAVEQQAKKRLEQQK) are a coiled coil. A compositionally biased stretch (low complexity) spans 2054-2070 (IATSTTSPTSSTTSTIS). Ser-2098 is modified (phosphoserine). At Arg-2155 the chain carries Omega-N-methylarginine. The segment at 2160–2180 (TIRPNTSGSGGTTSNSQVITG) is disordered. Asymmetric dimethylarginine is present on residues Arg-2162, Arg-2184, and Arg-2191. The segment covering 2232–2256 (VSAPNTVSSTPGQKSLTSATSTSNI) has biased composition (polar residues). 4 disordered regions span residues 2232 to 2270 (VSAP…QQGQ), 2346 to 2549 (TAST…RPQL), 2714 to 2733 (QAAK…SKQN), and 2795 to 2858 (PCPP…ISTT). 2 stretches are compositionally biased toward low complexity: residues 2257–2270 (QSSA…QQGQ) and 2346–2362 (TAST…AGTG). The segment covering 2363–2375 (EQRQSKLSPQMQV) has biased composition (polar residues). Positions 2391-2431 (PAEAQPQTAQPSAQPQPQTQPQSPAQPEVQTQPEVQTQTTV) are enriched in low complexity. A compositionally biased stretch (polar residues) spans 2432–2485 (SSHVPSEAQPTHAQSSKPQVAAQSQPQSNVQGQSPVRVQSPSQTRIRPSTPSQL). The residue at position 2465 (Ser-2465) is a Phosphoserine. The segment covering 2486–2538 (SPGQQSQVQTTTSQPIPIQPHTSLQIPSQGQPQSQPQVQSSTQTLSSGQTLNQ) has biased composition (low complexity). Residues 2706–2732 (DKIDKEEKQAAKKRKREESVEQKRSKQ) adopt a coiled-coil conformation. Basic and acidic residues predominate over residues 2714–2729 (QAAKKRKREESVEQKR). Residues 2795 to 2818 (PCPPVTPAPPAPPAPPPSPPPPPA) are compositionally biased toward pro residues. The span at 2838 to 2847 (KREEEKDSSS) shows a compositional bias: basic and acidic residues. A PHD-type 2 zinc finger spans residues 2867 to 2918 (KLYCICKTPYDESKFYIGCDRCQNWYHGRCVGILQSEAELIDEYVCPQCQST). The 105-residue stretch at 2927–3031 (PLTEKDYEGL…SFFVQKLKGF (105 aa)) folds into the Bromo domain.

This sequence belongs to the PBTF family. As to quaternary structure, interacts with MAZ. Interacts with KEAP1. Component of the NURF-1 ISWI chromatin remodeling complex (also called the nucleosome-remodeling factor (NURF) complex) at least composed of SMARCA1 (isoform 2), BPTF, RBBP4 and RBBP7. Within the complex interacts with isoform 2 of SMARCA1. Component of the BPFT-SMARCA1 complex at least composed of SMARCA1 (isoform 1), BPFT, RBBP4 and RBBP7; the complex is catalytically inactive and does not remodel chromatin. Within the complex interacts with isoform 1 of SMARCA1. Component of the NURF-5 ISWI chromatin remodeling complex at least composed of SMARCA5/SNF2H and BPTF. Within NURF-5 ISWI chromatin remodeling complex interacts with SMARCA5/SNF2H. Phosphorylation enhances DNA-binding. In terms of processing, highly susceptible to proteolysis. As to expression, ubiquitously expressed, with highest levels in testis. Present in kidney, liver and brain. In the brain, highest levels are found in motor cortex (at protein level).

It localises to the cytoplasm. Its subcellular location is the nucleus. Functionally, regulatory subunit of the ATP-dependent NURF-1 and NURF-5 ISWI chromatin remodeling complexes, which form ordered nucleosome arrays on chromatin and facilitate access to DNA during DNA-templated processes such as DNA replication, transcription, and repair. The NURF-1 ISWI chromatin remodeling complex has a lower ATP hydrolysis rate than the NURF-5 ISWI chromatin remodeling complex. Within the NURF-1 ISWI chromatin-remodeling complex, binds to the promoters of En1 and En2 to positively regulate their expression and promote brain development. Histone-binding protein which binds to H3 tails trimethylated on 'Lys-4' (H3K4me3), which mark transcription start sites of active genes. Binds to histone H3 tails dimethylated on 'Lys-4' (H3K4Me2) to a lesser extent. May also regulate transcription through direct binding to DNA or transcription factors. The chain is Nucleosome-remodeling factor subunit BPTF (BPTF) from Homo sapiens (Human).